A 201-amino-acid chain; its full sequence is Holliday junction branch migration complex subunit RuvA (201 aa).

Residues 1 to 64 (MFAFLRGELV…EDAQQLFGFL (64 aa)) are domain I. Positions 65–143 (DEEELQLFRL…KIQPAASGKT (79 aa)) are domain II. A flexible linker region spans residues 144–154 (AGAPQALQLNE). The segment at 154-201 (EDALAALMTLGFPKPAAQKAISGILETSPGLSVEEVVRAALIAIHNNF) is domain III.

This sequence belongs to the RuvA family. As to quaternary structure, homotetramer. Forms an RuvA(8)-RuvB(12)-Holliday junction (HJ) complex. HJ DNA is sandwiched between 2 RuvA tetramers; dsDNA enters through RuvA and exits via RuvB. An RuvB hexamer assembles on each DNA strand where it exits the tetramer. Each RuvB hexamer is contacted by two RuvA subunits (via domain III) on 2 adjacent RuvB subunits; this complex drives branch migration. In the full resolvosome a probable DNA-RuvA(4)-RuvB(12)-RuvC(2) complex forms which resolves the HJ.

It localises to the cytoplasm. Functionally, the RuvA-RuvB-RuvC complex processes Holliday junction (HJ) DNA during genetic recombination and DNA repair, while the RuvA-RuvB complex plays an important role in the rescue of blocked DNA replication forks via replication fork reversal (RFR). RuvA specifically binds to HJ cruciform DNA, conferring on it an open structure. The RuvB hexamer acts as an ATP-dependent pump, pulling dsDNA into and through the RuvAB complex. HJ branch migration allows RuvC to scan DNA until it finds its consensus sequence, where it cleaves and resolves the cruciform DNA. In Chlorobaculum tepidum (strain ATCC 49652 / DSM 12025 / NBRC 103806 / TLS) (Chlorobium tepidum), this protein is Holliday junction branch migration complex subunit RuvA.